The following is a 293-amino-acid chain: Triacylglycerol lipase (293 aa).

The AB hydrolase-1 domain maps to 10–206; the sequence is PILLVHGLFG…YYSWSGIIKG (197 aa). L17 provides a ligand contact to substrate. S83 serves as the catalytic Nucleophile. Q84 provides a ligand contact to substrate. D217 lines the Ca(2+) pocket. Residues D238 and H260 each act as charge relay system in the active site. Ca(2+) contacts are provided by D262, H266, and R269.

The protein belongs to the AB hydrolase superfamily. Pseudomonas lipase family. Requires Ca(2+) as cofactor.

The protein resides in the secreted. The enzyme catalyses a triacylglycerol + H2O = a diacylglycerol + a fatty acid + H(+). In terms of biological role, catalyzes the hydrolysis of triacylglycerols, with the highest activity with tributyrin (C4), lower activity with tricaprylin (C8), and much lower activity with triacetin (C2), trilaurin (C12) and triolein (C18). The protein is Triacylglycerol lipase (lips) of Pseudomonas fragi.